The sequence spans 473 residues: H(+)/Cl(-) exchange transporter ClcA (473 aa).

Topologically, residues methionine 1–proline 32 are cytoplasmic. A helical transmembrane segment spans residues leucine 33–valine 69. Topologically, residues histidine 70–proline 76 are periplasmic. Residues leucine 77 to tyrosine 100 traverse the membrane as a helical segment. The Selectivity filter part_1 motif lies at glycine 106–proline 110. Serine 107 lines the chloride pocket. Residues isoleucine 109–leucine 116 constitute an intramembrane region (helical). Topologically, residues glutamate 117–arginine 123 are cytoplasmic. A run of 2 helical transmembrane segments spans residues tryptophan 124–glycine 141 and glutamate 148–phenylalanine 166. Residues glycine 146–proline 150 carry the Selectivity filter part_2 motif. At arginine 167–threonine 176 the chain is on the cytoplasmic side. 2 intramembrane regions (helical) span residues leucine 177–alanine 189 and proline 193–isoleucine 201. Residues glutamate 202–serine 214 are Cytoplasmic-facing. A helical membrane pass occupies residues isoleucine 215–phenylalanine 232. Residues asparagine 233–leucine 252 are Periplasmic-facing. The chain crosses the membrane as a helical span at residues tryptophan 253–histidine 281. The Cytoplasmic portion of the chain corresponds to arginine 282–asparagine 287. A helical membrane pass occupies residues isoleucine 288–alanine 309. At proline 310–serine 329 the chain is on the periplasmic side. A run of 2 helical transmembrane segments spans residues methionine 330–serine 349 and glycine 355–valine 376. A Selectivity filter part_3 motif is present at residues glycine 355–proline 359. Residues isoleucine 356 and phenylalanine 357 each contribute to the chloride site. At glutamate 377–alanine 386 the chain is on the periplasmic side. Residues glycine 387 to serine 401 constitute an intramembrane region (helical). Residues isoleucine 402 to alanine 404 constitute an intramembrane region (note=Loop between two helices). Positions proline 405–threonine 416 form an intramembrane region, helical. Positions aspartate 417–leucine 421 form an intramembrane region, note=Loop between two helices. Residues isoleucine 422 to phenylalanine 438 form a helical membrane-spanning segment. The Cytoplasmic segment spans residues threonine 439–threonine 473. Tyrosine 445 contacts chloride.

It belongs to the chloride channel (TC 2.A.49) family. ClcA subfamily. In terms of assembly, homodimer.

It is found in the cell inner membrane. The catalysed reaction is 2 chloride(in) + H(+)(out) = 2 chloride(out) + H(+)(in). Its function is as follows. Proton-coupled chloride transporter. Functions as antiport system and exchanges two chloride ions for 1 proton. Probably acts as an electrical shunt for an outwardly-directed proton pump that is linked to amino acid decarboxylation, as part of the extreme acid resistance (XAR) response. This is H(+)/Cl(-) exchange transporter ClcA from Escherichia coli O157:H7.